Reading from the N-terminus, the 207-residue chain is Vexin (207 aa).

Positions 65-104 (RDTGDRRWLQTGRLQTARPPGAHPTKTPSRPVGISEPKTS) are disordered.

It belongs to the vexin family.

Its subcellular location is the cell membrane. It is found in the nucleus. Its function is as follows. Required for neurogenesis in the neural plate and retina. Strongly cooperates with neural bHLH factors to promote neurogenesis. The chain is Vexin from Mus musculus (Mouse).